The sequence spans 394 residues: MADLSNTKLNYVTFNQDHSCLAVATSRGFRIYHTDPFSKIFNSDEGNVTIIEMLFSTSLVAMVRSPRHLVIQNTKRGSIICDLTFPTAVLAVRLNRKTLAVVLEEEIYVYDIGNMALKHTIATSPNPNAIFALSPMSDRSYIAYPMPKPREDQGERRPAHAPPLSEYVPPTSGALMVFDTTAGKAVNVIEAHKMPLCCIALNHEGTKVATASERGTIVRVHSVPEGHKLFEFRRGTIPSTIYNMSFNLSSTLLCVSSSSETVHIFRLASAQNANAGGAGPAALETPGSPRANRWSRSKSIDGSEYSPSGDSDSSPRGETPEAGPSGPSAARRQSGTFGSMLRRSSQIVSRSVAGAVVPYLPQSVAEMWEPQRDFASVKIPKPTNAGDALLGPCL.

One copy of the WD 1 repeat lies at 4-42 (LSNTKLNYVTFNQDHSCLAVATSRGFRIYHTDPFSKIFN). Residues 146–165 (MPKPREDQGERRPAHAPPLS) form a disordered region. Residues 148 to 158 (KPREDQGERRP) show a composition bias toward basic and acidic residues. WD repeat units follow at residues 191-231 (AHKM…KLFE) and 236-275 (TIPS…NANA). Positions 232-236 (FRRGT) match the L/FRRG motif motif. The disordered stretch occupies residues 274-342 (NAGGAGPAAL…QSGTFGSMLR (69 aa)). Residues 302 to 312 (GSEYSPSGDSD) are compositionally biased toward low complexity. Residues 331–342 (RRQSGTFGSMLR) are compositionally biased toward polar residues.

Belongs to the WD repeat PROPPIN family. As to quaternary structure, component of the PI(3,5)P2 regulatory complex.

Its subcellular location is the preautophagosomal structure membrane. It is found in the vacuole membrane. It localises to the endosome membrane. The PI(3,5)P2 regulatory complex regulates both the synthesis and turnover of phosphatidylinositol 3,5-bisphosphate (PtdIns(3,5)P2). Necessary for proper vacuole morphology. Plays an important role in osmotically-induced vacuole fragmentation. Required for cytoplasm to vacuole transport (Cvt) vesicle formation, pexophagy and starvation-induced autophagy. Involved in correct ATG9 trafficking to the pre-autophagosomal structure. Might also be involved in premeiotic DNA replication. The polypeptide is Autophagy-related protein 18 (ATG18) (Chaetomium globosum (strain ATCC 6205 / CBS 148.51 / DSM 1962 / NBRC 6347 / NRRL 1970) (Soil fungus)).